The primary structure comprises 369 residues: Chaperone protein DnaJ (369 aa).

The region spanning 5–70 (DYYEVLGVGR…NKRAAYDQFG (66 aa)) is the J domain. The segment at 128-206 (GAETQIRIPR…CHGAGWVKRQ (79 aa)) adopts a CR-type zinc-finger fold. Residues cysteine 141, cysteine 144, cysteine 158, cysteine 161, cysteine 180, cysteine 183, cysteine 194, and cysteine 197 each coordinate Zn(2+). CXXCXGXG motif repeat units follow at residues 141-148 (CDTCHGSG), 158-165 (CPTCNGHG), 180-187 (CSHCQGSG), and 194-201 (CGDCHGAG).

This sequence belongs to the DnaJ family. As to quaternary structure, homodimer. The cofactor is Zn(2+).

It localises to the cytoplasm. Participates actively in the response to hyperosmotic and heat shock by preventing the aggregation of stress-denatured proteins and by disaggregating proteins, also in an autonomous, DnaK-independent fashion. Unfolded proteins bind initially to DnaJ; upon interaction with the DnaJ-bound protein, DnaK hydrolyzes its bound ATP, resulting in the formation of a stable complex. GrpE releases ADP from DnaK; ATP binding to DnaK triggers the release of the substrate protein, thus completing the reaction cycle. Several rounds of ATP-dependent interactions between DnaJ, DnaK and GrpE are required for fully efficient folding. Also involved, together with DnaK and GrpE, in the DNA replication of plasmids through activation of initiation proteins. In Nitrosomonas europaea (strain ATCC 19718 / CIP 103999 / KCTC 2705 / NBRC 14298), this protein is Chaperone protein DnaJ.